The chain runs to 393 residues: Cell division protein FtsZ 2 (393 aa).

The segment at 1–28 (MQDIVQDALDNAEAEQREMDGDGDGDEF) is disordered. Residues 40–44 (GAGNN), 127–129 (GTG), Glu-158, Arg-161, and Asp-204 contribute to the GTP site. The disordered stretch occupies residues 339 to 393 (GPSTQKQADKSRRELQDVDSKQRAADDAGAGGFGGAHSDGGQDEVEQENGLDVIR). Positions 345 to 364 (QADKSRRELQDVDSKQRAAD) are enriched in basic and acidic residues. The span at 367–376 (GAGGFGGAHS) shows a compositional bias: gly residues.

It belongs to the FtsZ family. Homodimer. Polymerizes to form a dynamic ring structure in a strictly GTP-dependent manner. Interacts directly with several other division proteins.

It localises to the cytoplasm. In terms of biological role, essential cell division protein that forms a contractile ring structure (Z ring) at the future cell division site. The regulation of the ring assembly controls the timing and the location of cell division. One of the functions of the FtsZ ring is to recruit other cell division proteins to the septum to produce a new cell wall between the dividing cells. Binds GTP and shows GTPase activity. Overexpression causes significant changes in cell morphology. The chain is Cell division protein FtsZ 2 from Halobacterium salinarum (strain ATCC 29341 / DSM 671 / R1).